The following is a 374-amino-acid chain: Speckle-type POZ protein (374 aa).

In terms of domain architecture, MATH spans 31–161 (KFSYMWTINN…DDKLTLFCEV (131 aa)). A required for nuclear localization region spans residues 71 to 191 (VNPKGLDEES…PDCRLADELG (121 aa)). The region spanning 173 to 297 (QNTMNMVKVP…MCEDALCTSL (125 aa)) is the BTB domain. The interval 297 to 355 (LSVENAAEILILADLHSADQLKTQAVDFINYHASDVMETSGWKSMVASHPHLVAEAYRS) is homodimerization.

Belongs to the Tdpoz family. Homodimer. Part of cullin-RING-based BCR (BTB-CUL3-RBX1) E3 ubiquitin-protein ligase complexes that contain CUL3 and SPOP, plus a target protein.

The protein resides in the nucleus. The protein localises to the nucleus speckle. It functions in the pathway protein modification; protein ubiquitination. Functionally, component of a cullin-RING-based BCR (BTB-CUL3-RBX1) E3 ubiquitin-protein ligase complex that mediates the ubiquitination of target proteins, leading most often to their proteasomal degradation. This chain is Speckle-type POZ protein (spop), found in Danio rerio (Zebrafish).